Reading from the N-terminus, the 263-residue chain is 4-hydroxy-tetrahydrodipicolinate reductase (263 aa).

NAD(+) is bound by residues 8–13, D34, 99–101, and 125–128; these read GACGRM, GTT, and SPNY. H157 acts as the Proton donor/acceptor in catalysis. Residue H158 participates in (S)-2,3,4,5-tetrahydrodipicolinate binding. The active-site Proton donor is the K161. 167-168 provides a ligand contact to (S)-2,3,4,5-tetrahydrodipicolinate; that stretch reads GT.

It belongs to the DapB family.

Its subcellular location is the cytoplasm. The enzyme catalyses (S)-2,3,4,5-tetrahydrodipicolinate + NAD(+) + H2O = (2S,4S)-4-hydroxy-2,3,4,5-tetrahydrodipicolinate + NADH + H(+). The catalysed reaction is (S)-2,3,4,5-tetrahydrodipicolinate + NADP(+) + H2O = (2S,4S)-4-hydroxy-2,3,4,5-tetrahydrodipicolinate + NADPH + H(+). Its pathway is amino-acid biosynthesis; L-lysine biosynthesis via DAP pathway; (S)-tetrahydrodipicolinate from L-aspartate: step 4/4. Functionally, catalyzes the conversion of 4-hydroxy-tetrahydrodipicolinate (HTPA) to tetrahydrodipicolinate. In Methanosarcina acetivorans (strain ATCC 35395 / DSM 2834 / JCM 12185 / C2A), this protein is 4-hydroxy-tetrahydrodipicolinate reductase.